The chain runs to 315 residues: Ribose-phosphate pyrophosphokinase (315 aa).

Residues 37–39 and 96–97 contribute to the ATP site; these read DGE and RQ. Residues histidine 131 and aspartate 170 each contribute to the Mg(2+) site. The active site involves lysine 194. D-ribose 5-phosphate-binding positions include arginine 196, aspartate 220, and 224-228; that span reads DTGGT.

It belongs to the ribose-phosphate pyrophosphokinase family. Class I subfamily. In terms of assembly, homohexamer. Mg(2+) serves as cofactor.

Its subcellular location is the cytoplasm. It catalyses the reaction D-ribose 5-phosphate + ATP = 5-phospho-alpha-D-ribose 1-diphosphate + AMP + H(+). It functions in the pathway metabolic intermediate biosynthesis; 5-phospho-alpha-D-ribose 1-diphosphate biosynthesis; 5-phospho-alpha-D-ribose 1-diphosphate from D-ribose 5-phosphate (route I): step 1/1. Its function is as follows. Involved in the biosynthesis of the central metabolite phospho-alpha-D-ribosyl-1-pyrophosphate (PRPP) via the transfer of pyrophosphoryl group from ATP to 1-hydroxyl of ribose-5-phosphate (Rib-5-P). This Salmonella typhi protein is Ribose-phosphate pyrophosphokinase.